Here is a 425-residue protein sequence, read N- to C-terminus: Histidinol dehydrogenase (425 aa).

Ser-231, Gln-253, and His-256 together coordinate substrate. Gln-253 and His-256 together coordinate Zn(2+). Active-site proton acceptor residues include Glu-321 and His-322. The substrate site is built by His-322, Asp-355, Glu-409, and His-414. Residue Asp-355 participates in Zn(2+) binding. His-414 contributes to the Zn(2+) binding site.

Belongs to the histidinol dehydrogenase family. It depends on Zn(2+) as a cofactor.

The catalysed reaction is L-histidinol + 2 NAD(+) + H2O = L-histidine + 2 NADH + 3 H(+). Its pathway is amino-acid biosynthesis; L-histidine biosynthesis; L-histidine from 5-phospho-alpha-D-ribose 1-diphosphate: step 9/9. Functionally, catalyzes the sequential NAD-dependent oxidations of L-histidinol to L-histidinaldehyde and then to L-histidine. In Carboxydothermus hydrogenoformans (strain ATCC BAA-161 / DSM 6008 / Z-2901), this protein is Histidinol dehydrogenase.